Here is a 168-residue protein sequence, read N- to C-terminus: Photosystem I assembly protein Ycf3 (168 aa).

3 TPR repeats span residues 35-68, 72-105, and 120-153; these read AFTYYRDGMSAQSEGNYAEALQNYYEAMRLEIDP, SYILYNIGLIHTSNGEHTKALEYYFRALERNPFL, and GEQAIQQGDSEIAEAWFDQAAEYWKQAIALTPGN.

This sequence belongs to the Ycf3 family.

The protein resides in the plastid. It is found in the chloroplast thylakoid membrane. Its function is as follows. Essential for the assembly of the photosystem I (PSI) complex. May act as a chaperone-like factor to guide the assembly of the PSI subunits. The chain is Photosystem I assembly protein Ycf3 from Solanum bulbocastanum (Wild potato).